The following is a 601-amino-acid chain: 66 kDa stress protein (601 aa).

WD repeat units follow at residues 56–95, 100–143, 145–184, 187–226, 233–272, 318–357, 435–478, 483–522, 526–565, and 569–600; these read EHAQ…HPLK, VLSG…GEIT, HSKA…FKHA, EHTR…KVGA, AHAL…LTTF, GHNK…AVPI, ASTT…LSEQ, GHRG…IKVE, YHNA…KHIA, and AHRG…WTIK.

It belongs to the WD repeat AIP1 family.

Associated with the process of cyst formation. The protein is 66 kDa stress protein of Physarum polycephalum (Slime mold).